The primary structure comprises 428 residues: Light-independent protochlorophyllide reductase subunit N (428 aa).

Residues Cys-30, Cys-55, and Cys-116 each coordinate [4Fe-4S] cluster.

This sequence belongs to the BchN/ChlN family. Protochlorophyllide reductase is composed of three subunits; BchL, BchN and BchB. Forms a heterotetramer of two BchB and two BchN subunits. Requires [4Fe-4S] cluster as cofactor.

It catalyses the reaction chlorophyllide a + oxidized 2[4Fe-4S]-[ferredoxin] + 2 ADP + 2 phosphate = protochlorophyllide a + reduced 2[4Fe-4S]-[ferredoxin] + 2 ATP + 2 H2O. It functions in the pathway porphyrin-containing compound metabolism; bacteriochlorophyll biosynthesis (light-independent). Component of the dark-operative protochlorophyllide reductase (DPOR) that uses Mg-ATP and reduced ferredoxin to reduce ring D of protochlorophyllide (Pchlide) to form chlorophyllide a (Chlide). This reaction is light-independent. The NB-protein (BchN-BchB) is the catalytic component of the complex. The polypeptide is Light-independent protochlorophyllide reductase subunit N (Bradyrhizobium sp. (strain BTAi1 / ATCC BAA-1182)).